We begin with the raw amino-acid sequence, 552 residues long: Urocanate hydratase (552 aa).

NAD(+)-binding positions include 49-50 (GG), Gln127, 173-175 (GMG), Asp193, 239-240 (NA), 260-264 (QTSAH), 270-271 (YI), and Tyr319. Cys407 is a catalytic residue. Gly489 serves as a coordination point for NAD(+).

Belongs to the urocanase family. NAD(+) is required as a cofactor.

Its subcellular location is the cytoplasm. It carries out the reaction 4-imidazolone-5-propanoate = trans-urocanate + H2O. The protein operates within amino-acid degradation; L-histidine degradation into L-glutamate; N-formimidoyl-L-glutamate from L-histidine: step 2/3. Its function is as follows. Catalyzes the conversion of urocanate to 4-imidazolone-5-propionate. This Bacillus cereus (strain B4264) protein is Urocanate hydratase.